A 432-amino-acid chain; its full sequence is Maltoporin (432 aa).

Residues 1–22 form the signal peptide; sequence MKKVSVIAAAVAATLAAGSAFA.

This sequence belongs to the porin LamB (TC 1.B.3) family. In terms of assembly, homotrimer formed of three 18-stranded antiparallel beta-barrels, containing three independent channels.

It localises to the cell outer membrane. The enzyme catalyses beta-maltose(in) = beta-maltose(out). In terms of biological role, involved in the transport of maltose and maltodextrins. The polypeptide is Maltoporin (Vibrio parahaemolyticus serotype O3:K6 (strain RIMD 2210633)).